The following is a 541-amino-acid chain: Chaperonin GroEL 2 (541 aa).

ATP-binding positions include 29–32, 86–90, Gly413, 476–478, and Asp492; these read TLGP, DGTTT, and NAA.

It belongs to the chaperonin (HSP60) family. As to quaternary structure, forms a cylinder of 14 subunits composed of two heptameric rings stacked back-to-back. Interacts with the co-chaperonin GroES.

It localises to the cytoplasm. The catalysed reaction is ATP + H2O + a folded polypeptide = ADP + phosphate + an unfolded polypeptide.. Together with its co-chaperonin GroES, plays an essential role in assisting protein folding. The GroEL-GroES system forms a nano-cage that allows encapsulation of the non-native substrate proteins and provides a physical environment optimized to promote and accelerate protein folding. This Streptomyces coelicolor (strain ATCC BAA-471 / A3(2) / M145) protein is Chaperonin GroEL 2.